Here is a 53-residue protein sequence, read N- to C-terminus: Minor histocompatibility protein HMSD variant form (53 aa).

As to quaternary structure, ACC-6 forms a complex with MHC HLA-B*4403. In terms of tissue distribution, highly expressed in dendritic cells and primary leukemia cells, especially those of myeloid lineage. ACC-6 expression is limited to cells of the hematopoietic lineage.

This splice variant of HMSD is the precursor of the histocompatibility antigen ACC-6. More generally, minor histocompatibility antigens (mHags) refer to immunogenic peptide which, when complexed with MHC, can generate an immune response after recognition by specific T-cells. The peptides are derived from polymorphic intracellular proteins, which are cleaved by normal pathways of antigen processing. The binding of these peptides to MHC class I or class II molecules and its expression on the cell surface can stimulate T-cell responses and thereby trigger graft rejection or graft-versus-host disease (GVHD) after hematopoietic stem cell transplantation from HLA-identical sibling donor. GVHD is a frequent complication after bone marrow transplantation (BMT), due to mismatch of minor histocompatibility antigen in HLA-matched sibling marrow transplants. However, associated with GVHD, a favorable graft-versus-leukemia (GVL) can be induced by donor-recipient disparities in mHags. ACC-6 is presented to the cell surface by MHC HLA-B*4403. This complex specifically elicits donor-cytotoxic T-lymphocyte (CTL) reactivity against hematologic malignancies after treatment by HLA-identical allogenic BMT. It induces cell recognition and lysis by CTL. Immunogenicity of most autosomal mHags results from single-nucleotide polymorphisms that cause amino-acid substitutions within epitopes, leading to the differential recognition of peptides between donor and recipient. This is Minor histocompatibility protein HMSD variant form (HMSD) from Homo sapiens (Human).